A 391-amino-acid chain; its full sequence is Multidrug resistance protein MdtL (391 aa).

The next 12 membrane-spanning stretches (helical) occupy residues 4–24 (FLIC…MYLV), 42–62 (IAFS…GKVA), 69–89 (PVAI…SLAE), 93–113 (LFLA…VVAF), 131–151 (LLNG…HLIM), 158–178 (SLFW…LFIL), 203–222 (FFLS…LTFV), 245–265 (ALTA…LGIF), 269–289 (TLMI…AVSP), 293–313 (VSLF…GVAM), 331–351 (LGIA…VVGI), and 356–376 (MLIG…MFVA).

The protein belongs to the major facilitator superfamily. DHA1 family. MdtL (TC 2.A.1.2.22) subfamily.

It localises to the cell inner membrane. Functionally, confers resistance to chloramphenicol. The sequence is that of Multidrug resistance protein MdtL from Escherichia coli O45:K1 (strain S88 / ExPEC).